Here is a 414-residue protein sequence, read N- to C-terminus: ORC1-type DNA replication protein 1 (414 aa).

Residues 70 to 74 (TGKTA), Tyr213, and Arg225 contribute to the ATP site.

It belongs to the CDC6/cdc18 family.

In terms of biological role, involved in regulation of DNA replication. The chain is ORC1-type DNA replication protein 1 (cdc6-1) from Methanosarcina acetivorans (strain ATCC 35395 / DSM 2834 / JCM 12185 / C2A).